Consider the following 303-residue polypeptide: Ribosomal protein L11 methyltransferase (303 aa).

The S-adenosyl-L-methionine site is built by Thr144, Gly165, Asp187, and Asn235.

This sequence belongs to the methyltransferase superfamily. PrmA family.

The protein resides in the cytoplasm. It carries out the reaction L-lysyl-[protein] + 3 S-adenosyl-L-methionine = N(6),N(6),N(6)-trimethyl-L-lysyl-[protein] + 3 S-adenosyl-L-homocysteine + 3 H(+). Its function is as follows. Methylates ribosomal protein L11. This Prochlorococcus marinus (strain MIT 9312) protein is Ribosomal protein L11 methyltransferase.